A 303-amino-acid polypeptide reads, in one-letter code: MKVIFMGTPEFAVPALKKLITHHEVKAVFAQQPKAKGRGLNLAKSPIHQLAFEHQIPVYTPSTLRNDKTINLINKINADIIVVIAYGFIVPKAILEAKKYGCLNIHPSDLPRHRGAAPLQRTIIEGDRKSSVCIMRMDAGLDTGDILMKEDFDLEERTTLEELHNKCANLGAELLIKTLANIDNIVPIKQSSDGVTYAHKLTKEEGKINWYESAYKIDCKIRGMNPWPGAYFSYNDKIIKILEAEYLNAEHHFTSGTVISDKLEIACGSGILRVKKLQQESKKALNIEEFLRGTNILKDTILK.

108-111 contacts (6S)-5,6,7,8-tetrahydrofolate; sequence SDLP.

It belongs to the Fmt family.

The enzyme catalyses L-methionyl-tRNA(fMet) + (6R)-10-formyltetrahydrofolate = N-formyl-L-methionyl-tRNA(fMet) + (6S)-5,6,7,8-tetrahydrofolate + H(+). Attaches a formyl group to the free amino group of methionyl-tRNA(fMet). The formyl group appears to play a dual role in the initiator identity of N-formylmethionyl-tRNA by promoting its recognition by IF2 and preventing the misappropriation of this tRNA by the elongation apparatus. This is Methionyl-tRNA formyltransferase from Rickettsia felis (strain ATCC VR-1525 / URRWXCal2) (Rickettsia azadi).